The primary structure comprises 106 residues: Nucleoid-associated protein Fjoh_2555 (106 aa).

This sequence belongs to the YbaB/EbfC family. As to quaternary structure, homodimer.

The protein localises to the cytoplasm. The protein resides in the nucleoid. Binds to DNA and alters its conformation. May be involved in regulation of gene expression, nucleoid organization and DNA protection. The sequence is that of Nucleoid-associated protein Fjoh_2555 from Flavobacterium johnsoniae (strain ATCC 17061 / DSM 2064 / JCM 8514 / BCRC 14874 / CCUG 350202 / NBRC 14942 / NCIMB 11054 / UW101) (Cytophaga johnsonae).